Here is a 111-residue protein sequence, read N- to C-terminus: Macrodomain Ori protein (111 aa).

Belongs to the MaoP family.

Functionally, involved in the organization of the Ori region of the chromosome into a macrodomain (MD). It constrains DNA mobility in the Ori macrodomain and limits long-distance DNA interactions with other chromosomal regions. This chain is Macrodomain Ori protein, found in Haemophilus influenzae (strain ATCC 51907 / DSM 11121 / KW20 / Rd).